Here is a 360-residue protein sequence, read N- to C-terminus: Photosystem II protein D1 (360 aa).

3 helical membrane-spanning segments follow: residues 29–46 (YIGWFGVLMIPTLVSAIA), 118–133 (HFLIGVACYLGREWEL), and 142–156 (WICVAFSAPVAAATA). His118 contacts chlorophyll a. A pheophytin a-binding site is contributed by Tyr126. The [CaMn4O5] cluster site is built by Asp170 and Glu189. The helical transmembrane segment at 197 to 218 (FHMLGVAGVFGGSLFSAMHGSL) threads the bilayer. His198 contributes to the chlorophyll a binding site. A quinone is bound by residues His215 and 264–265 (SF). Residue His215 participates in Fe cation binding. His272 serves as a coordination point for Fe cation. The helical transmembrane segment at 274–288 (FLAAWPVIGIWFTAL) threads the bilayer. [CaMn4O5] cluster is bound by residues His332, Glu333, Asp342, and Ala344. Residues 345–360 (AGDVAPVALTAPPING) constitute a propeptide that is removed on maturation.

It belongs to the reaction center PufL/M/PsbA/D family. PSII is composed of 1 copy each of membrane proteins PsbA, PsbB, PsbC, PsbD, PsbE, PsbF, PsbH, PsbI, PsbJ, PsbK, PsbL, PsbM, PsbT, PsbX, PsbY, PsbZ, Psb30/Ycf12, peripheral proteins PsbO, CyanoQ (PsbQ), PsbU, PsbV and a large number of cofactors. It forms dimeric complexes. The D1/D2 heterodimer binds P680, chlorophylls that are the primary electron donor of PSII, and subsequent electron acceptors. It shares a non-heme iron and each subunit binds pheophytin, quinone, additional chlorophylls, carotenoids and lipids. D1 provides most of the ligands for the Mn4-Ca-O5 cluster of the oxygen-evolving complex (OEC). There is also a Cl(-1) ion associated with D1 and D2, which is required for oxygen evolution. The PSII complex binds additional chlorophylls, carotenoids and specific lipids. serves as cofactor. Tyr-161 forms a radical intermediate that is referred to as redox-active TyrZ, YZ or Y-Z. Post-translationally, C-terminally processed by CtpA; processing is essential to allow assembly of the oxygen-evolving complex and thus photosynthetic growth.

It localises to the cellular thylakoid membrane. The catalysed reaction is 2 a plastoquinone + 4 hnu + 2 H2O = 2 a plastoquinol + O2. Photosystem II (PSII) is a light-driven water:plastoquinone oxidoreductase that uses light energy to abstract electrons from H(2)O, generating O(2) and a proton gradient subsequently used for ATP formation. It consists of a core antenna complex that captures photons, and an electron transfer chain that converts photonic excitation into a charge separation. The D1/D2 (PsbA/PsbD) reaction center heterodimer binds P680, the primary electron donor of PSII as well as several subsequent electron acceptors. The chain is Photosystem II protein D1 from Trichormus azollae (Anabaena azollae).